The chain runs to 419 residues: UDP-N-acetylmuramoylalanine--D-glutamate ligase (419 aa).

Gly-109–Thr-115 serves as a coordination point for ATP.

It belongs to the MurCDEF family.

Its subcellular location is the cytoplasm. It carries out the reaction UDP-N-acetyl-alpha-D-muramoyl-L-alanine + D-glutamate + ATP = UDP-N-acetyl-alpha-D-muramoyl-L-alanyl-D-glutamate + ADP + phosphate + H(+). The protein operates within cell wall biogenesis; peptidoglycan biosynthesis. Its function is as follows. Cell wall formation. Catalyzes the addition of glutamate to the nucleotide precursor UDP-N-acetylmuramoyl-L-alanine (UMA). The protein is UDP-N-acetylmuramoylalanine--D-glutamate ligase of Chlamydia caviae (strain ATCC VR-813 / DSM 19441 / 03DC25 / GPIC) (Chlamydophila caviae).